Consider the following 901-residue polypeptide: Protein translocase subunit SecA (901 aa).

ATP contacts are provided by residues Gln87, 105 to 109, and Asp512; that span reads GEGKT. Residues Cys885, Cys887, Cys896, and His897 each contribute to the Zn(2+) site.

This sequence belongs to the SecA family. In terms of assembly, monomer and homodimer. Part of the essential Sec protein translocation apparatus which comprises SecA, SecYEG and auxiliary proteins SecDF-YajC and YidC. Requires Zn(2+) as cofactor.

It localises to the cell inner membrane. The protein resides in the cytoplasm. It carries out the reaction ATP + H2O + cellular proteinSide 1 = ADP + phosphate + cellular proteinSide 2.. In terms of biological role, part of the Sec protein translocase complex. Interacts with the SecYEG preprotein conducting channel. Has a central role in coupling the hydrolysis of ATP to the transfer of proteins into and across the cell membrane, serving both as a receptor for the preprotein-SecB complex and as an ATP-driven molecular motor driving the stepwise translocation of polypeptide chains across the membrane. This is Protein translocase subunit SecA from Salmonella arizonae (strain ATCC BAA-731 / CDC346-86 / RSK2980).